We begin with the raw amino-acid sequence, 409 residues long: tRNA-specific 2-thiouridylase MnmA (409 aa).

ATP contacts are provided by residues 40–47 (GLSGGVDS) and Leu66. Catalysis depends on Cys127, which acts as the Nucleophile. Cysteines 127 and 237 form a disulfide. Residue Gly152 coordinates ATP. Residues 187-189 (KDQ) are interaction with tRNA. Residue Cys237 is the Cysteine persulfide intermediate of the active site. Positions 342 to 343 (RY) are interaction with tRNA.

Belongs to the MnmA/TRMU family.

The protein resides in the cytoplasm. It catalyses the reaction S-sulfanyl-L-cysteinyl-[protein] + uridine(34) in tRNA + AH2 + ATP = 2-thiouridine(34) in tRNA + L-cysteinyl-[protein] + A + AMP + diphosphate + H(+). In terms of biological role, catalyzes the 2-thiolation of uridine at the wobble position (U34) of tRNA, leading to the formation of s(2)U34. The sequence is that of tRNA-specific 2-thiouridylase MnmA from Prochlorococcus marinus (strain MIT 9313).